A 628-amino-acid chain; its full sequence is Eukaryotic peptide chain release factor GTP-binding subunit ERF3B (628 aa).

A compositionally biased stretch (low complexity) spans 1-10 (MDSGSSSSDS). Disordered regions lie at residues 1–44 (MDSG…REPL), 71–124 (SFLR…LEGS), and 146–191 (LEES…KSKS). Positions 201–425 (KEHVNVVFIG…YLDNLPNFNR (225 aa)) constitute a tr-type G domain. The interval 210 to 217 (GHVDAGKS) is G1. 213–218 (DAGKST) contributes to the GTP binding site. The interval 266-270 (GKTVE) is G2. Positions 287 to 290 (DAPG) are G3. Residues 349-352 (NKMD) and 391-393 (SGL) contribute to the GTP site. The segment at 349–352 (NKMD) is G4. A G5 region spans residues 391-393 (SGL).

The protein belongs to the TRAFAC class translation factor GTPase superfamily. Classic translation factor GTPase family. ERF3 subfamily. Component of the eRF1-eRF3-GTP ternary complex, composed of ETF1/ERF1 and ERF3 (GSPT1/ERF3A or GSPT2/ERF3B) and GTP. Component of the transient SURF (SMG1-UPF1-eRF1-eRF3) complex. Interacts with UPF1 and PABPC1.

It localises to the cytoplasm. The catalysed reaction is GTP + H2O = GDP + phosphate + H(+). In terms of biological role, GTPase component of the eRF1-eRF3-GTP ternary complex, a ternary complex that mediates translation termination in response to the termination codons UAA, UAG and UGA. GSPT2/ERF3B mediates ETF1/ERF1 delivery to stop codons: The eRF1-eRF3-GTP complex binds to a stop codon in the ribosomal A-site. GTP hydrolysis by GSPT2/ERF3B induces a conformational change that leads to its dissociation, permitting ETF1/ERF1 to accommodate fully in the A-site. Component of the transient SURF complex which recruits UPF1 to stalled ribosomes in the context of nonsense-mediated decay (NMD) of mRNAs containing premature stop codons. This is Eukaryotic peptide chain release factor GTP-binding subunit ERF3B (GSPT2) from Pongo abelii (Sumatran orangutan).